The primary structure comprises 393 residues: Proteasome-activating nucleotidase (393 aa).

A coiled-coil region spans residues 14–53 (SDEVQLVRLLEEKIKSLQIEIENLRKELNYYKAEMEKMLS). ATP contacts are provided by residues 178–183 (GTGKTM) and Tyr317. A docks into pockets in the proteasome alpha-ring to cause gate opening region spans residues 391-393 (KYS).

Belongs to the AAA ATPase family. In terms of assembly, homohexamer. The hexameric complex has a two-ring architecture resembling a top hat that caps the 20S proteasome core at one or both ends. Upon ATP-binding, the C-terminus of PAN interacts with the alpha-rings of the proteasome core by binding to the intersubunit pockets.

It localises to the cytoplasm. Its function is as follows. ATPase which is responsible for recognizing, binding, unfolding and translocation of substrate proteins into the archaeal 20S proteasome core particle. Is essential for opening the gate of the 20S proteasome via an interaction with its C-terminus, thereby allowing substrate entry and access to the site of proteolysis. Thus, the C-termini of the proteasomal ATPase function like a 'key in a lock' to induce gate opening and therefore regulate proteolysis. Unfolding activity requires energy from ATP hydrolysis, whereas ATP binding alone promotes ATPase-20S proteasome association which triggers gate opening, and supports translocation of unfolded substrates. This Saccharolobus islandicus (strain M.16.27) (Sulfolobus islandicus) protein is Proteasome-activating nucleotidase.